A 389-amino-acid polypeptide reads, in one-letter code: Diaminopimelate decarboxylase (389 aa).

Position 58 is an N6-(pyridoxal phosphate)lysine (Lys-58). Residues Gly-233 and 271–274 (ELGR) each bind pyridoxal 5'-phosphate. The substrate site is built by Arg-274, Arg-310, Tyr-314, Glu-342, and Tyr-370. Tyr-370 is a pyridoxal 5'-phosphate binding site.

The protein belongs to the Orn/Lys/Arg decarboxylase class-II family. LysA subfamily. Homodimer. Pyridoxal 5'-phosphate is required as a cofactor.

The catalysed reaction is meso-2,6-diaminopimelate + H(+) = L-lysine + CO2. Its pathway is amino-acid biosynthesis; L-lysine biosynthesis via DAP pathway; L-lysine from DL-2,6-diaminopimelate: step 1/1. Specifically catalyzes the decarboxylation of meso-diaminopimelate (meso-DAP) to L-lysine. The protein is Diaminopimelate decarboxylase of Francisella tularensis subsp. holarctica (strain LVS).